The chain runs to 131 residues: Small ribosomal subunit protein uS8 (131 aa).

It belongs to the universal ribosomal protein uS8 family. Part of the 30S ribosomal subunit. Contacts proteins S5 and S12.

One of the primary rRNA binding proteins, it binds directly to 16S rRNA central domain where it helps coordinate assembly of the platform of the 30S subunit. In Nitrosomonas eutropha (strain DSM 101675 / C91 / Nm57), this protein is Small ribosomal subunit protein uS8.